The chain runs to 190 residues: Peptidyl-tRNA hydrolase (190 aa).

A tRNA-binding site is contributed by Tyr-14. The active-site Proton acceptor is His-19. TRNA contacts are provided by Tyr-64, Asn-66, and Asn-112.

The protein belongs to the PTH family. As to quaternary structure, monomer.

Its subcellular location is the cytoplasm. The catalysed reaction is an N-acyl-L-alpha-aminoacyl-tRNA + H2O = an N-acyl-L-amino acid + a tRNA + H(+). Its function is as follows. Hydrolyzes ribosome-free peptidyl-tRNAs (with 1 or more amino acids incorporated), which drop off the ribosome during protein synthesis, or as a result of ribosome stalling. Functionally, catalyzes the release of premature peptidyl moieties from peptidyl-tRNA molecules trapped in stalled 50S ribosomal subunits, and thus maintains levels of free tRNAs and 50S ribosomes. This chain is Peptidyl-tRNA hydrolase, found in Pelodictyon phaeoclathratiforme (strain DSM 5477 / BU-1).